Here is a 440-residue protein sequence, read N- to C-terminus: tRNA(Ile)-lysidine synthase (440 aa).

An ATP-binding site is contributed by 25–30 (SGGVDS).

Belongs to the tRNA(Ile)-lysidine synthase family.

The protein localises to the cytoplasm. The enzyme catalyses cytidine(34) in tRNA(Ile2) + L-lysine + ATP = lysidine(34) in tRNA(Ile2) + AMP + diphosphate + H(+). In terms of biological role, ligates lysine onto the cytidine present at position 34 of the AUA codon-specific tRNA(Ile) that contains the anticodon CAU, in an ATP-dependent manner. Cytidine is converted to lysidine, thus changing the amino acid specificity of the tRNA from methionine to isoleucine. This is tRNA(Ile)-lysidine synthase from Vibrio cholerae serotype O1 (strain ATCC 39315 / El Tor Inaba N16961).